Reading from the N-terminus, the 318-residue chain is tRNA uridine(34) hydroxylase (318 aa).

The 95-residue stretch at 123–217 folds into the Rhodanese domain; sequence EDDDTVIIDA…YGKDPETKGQ (95 aa). The active-site Cysteine persulfide intermediate is the C177.

This sequence belongs to the TrhO family.

The catalysed reaction is uridine(34) in tRNA + AH2 + O2 = 5-hydroxyuridine(34) in tRNA + A + H2O. In terms of biological role, catalyzes oxygen-dependent 5-hydroxyuridine (ho5U) modification at position 34 in tRNAs. The polypeptide is tRNA uridine(34) hydroxylase (Staphylococcus aureus (strain Mu3 / ATCC 700698)).